The primary structure comprises 224 residues: Response regulator protein GraR (224 aa).

The region spanning 2–115 (QILLVEDDNT…VLIAKLQAIY (114 aa)) is the Response regulatory domain. Asp51 bears the 4-aspartylphosphate mark. The segment at residues 126–224 (KRTLTWQDAV…KVGKGYMAHE (99 aa)) is a DNA-binding region (ompR/PhoB-type). Thr128, Thr130, and Thr149 each carry phosphothreonine.

Interacts with GraX. Phosphorylated by GraS. Phosphorylated by Stk1; phosphorylation increases the DNA-binding activity of GraR.

The protein localises to the cytoplasm. Member of the two-component regulatory system GraR/GraS involved in resistance against cationic antimicrobial peptides (CAMPs). Upon phosphorylation by GraS, functions as a transcription regulator by direct binding to promoter regions of target genes such as adhesins, exoproteins, transporters, toxins, and proteins involved in cell wall synthesis. Down-regulates the expression of many genes involved in RNA and amino acid synthesis or glycolysis. The sequence is that of Response regulator protein GraR (graR) from Staphylococcus aureus (strain Mu3 / ATCC 700698).